Here is a 335-residue protein sequence, read N- to C-terminus: Biotin synthase (335 aa).

The Radical SAM core domain maps to 43–269 (YFGKKVKLNM…INPTKEIRIA (227 aa)). [4Fe-4S] cluster contacts are provided by Cys61, Cys65, and Cys68. [2Fe-2S] cluster is bound by residues Cys104, Cys137, Cys197, and Arg267.

This sequence belongs to the radical SAM superfamily. Biotin synthase family. As to quaternary structure, homodimer. Requires [4Fe-4S] cluster as cofactor. [2Fe-2S] cluster is required as a cofactor.

The enzyme catalyses (4R,5S)-dethiobiotin + (sulfur carrier)-SH + 2 reduced [2Fe-2S]-[ferredoxin] + 2 S-adenosyl-L-methionine = (sulfur carrier)-H + biotin + 2 5'-deoxyadenosine + 2 L-methionine + 2 oxidized [2Fe-2S]-[ferredoxin]. Its pathway is cofactor biosynthesis; biotin biosynthesis; biotin from 7,8-diaminononanoate: step 2/2. In terms of biological role, catalyzes the conversion of dethiobiotin (DTB) to biotin by the insertion of a sulfur atom into dethiobiotin via a radical-based mechanism. The sequence is that of Biotin synthase from Staphylococcus aureus (strain MRSA252).